The sequence spans 397 residues: 3-ketoacyl-CoA thiolase, mitochondrial (397 aa).

The N-terminal 16 residues, methionine 1–proline 16, are a transit peptide targeting the mitochondrion; not cleaved. Lysine 25 carries the post-translational modification N6-acetyllysine; alternate. Residue lysine 25 is modified to N6-succinyllysine; alternate. Lysine 45 carries the N6-succinyllysine modification. Cysteine 92 (acyl-thioester intermediate) is an active-site residue. At threonine 119 the chain carries Phosphothreonine. A Phosphoserine modification is found at serine 121. A Phosphotyrosine modification is found at tyrosine 127. Residue threonine 136 is modified to Phosphothreonine. Residue lysine 137 is modified to N6-acetyllysine; alternate. Lysine 137 carries the N6-succinyllysine; alternate modification. The residue at position 140 (serine 140) is a Phosphoserine. An N6-acetyllysine; alternate mark is found at lysine 143, lysine 171, lysine 191, and lysine 209. Residues lysine 143, lysine 171, lysine 191, and lysine 209 each carry the N6-succinyllysine; alternate modification. Residues lysine 211, lysine 212, and lysine 214 each carry the N6-succinyllysine modification. Positions 224 and 227 each coordinate CoA. Lysine 234 carries the post-translational modification N6-acetyllysine; alternate. An N6-succinyllysine; alternate modification is found at lysine 234. Lysine 240 carries the post-translational modification N6-succinyllysine. Lysine 241 is modified (N6-acetyllysine). A CoA-binding site is contributed by serine 251. Lysine 269 and lysine 270 each carry N6-acetyllysine. Lysine 305 carries the post-translational modification N6-acetyllysine; alternate. Residue lysine 305 is modified to N6-succinyllysine; alternate. Serine 310 is modified (phosphoserine). Residue lysine 312 is modified to N6-acetyllysine; alternate. At lysine 312 the chain carries N6-succinyllysine; alternate. A Phosphoserine modification is found at serine 333. Residues lysine 340 and lysine 375 each carry the N6-acetyllysine modification. Residue cysteine 382 is the Proton donor/acceptor of the active site.

This sequence belongs to the thiolase-like superfamily. Thiolase family. Homotetramer. Interacts with BNIP3.

It is found in the mitochondrion. The catalysed reaction is an acyl-CoA + acetyl-CoA = a 3-oxoacyl-CoA + CoA. It catalyses the reaction 2 acetyl-CoA = acetoacetyl-CoA + CoA. It carries out the reaction acetyl-CoA + H2O = acetate + CoA + H(+). The enzyme catalyses propanoyl-CoA + H2O = propanoate + CoA + H(+). The catalysed reaction is butanoyl-CoA + H2O = butanoate + CoA + H(+). It catalyses the reaction hexanoyl-CoA + H2O = hexanoate + CoA + H(+). It carries out the reaction octanoyl-CoA + H2O = octanoate + CoA + H(+). The enzyme catalyses decanoyl-CoA + H2O = decanoate + CoA + H(+). The catalysed reaction is dodecanoyl-CoA + H2O = dodecanoate + CoA + H(+). It catalyses the reaction tetradecanoyl-CoA + H2O = tetradecanoate + CoA + H(+). It carries out the reaction hexadecanoyl-CoA + H2O = hexadecanoate + CoA + H(+). It functions in the pathway lipid metabolism; fatty acid beta-oxidation. Functionally, in the production of energy from fats, this is one of the enzymes that catalyzes the last step of the mitochondrial beta-oxidation pathway, an aerobic process breaking down fatty acids into acetyl-CoA. Using free coenzyme A/CoA, catalyzes the thiolytic cleavage of medium- to long-chain unbranched 3-oxoacyl-CoAs into acetyl-CoA and a fatty acyl-CoA shortened by two carbon atoms. Also catalyzes the condensation of two acetyl-CoA molecules into acetoacetyl-CoA and could be involved in the production of ketone bodies. Also displays hydrolase activity on various fatty acyl-CoAs. Thereby, could be responsible for the production of acetate in a side reaction to beta-oxidation. Abolishes BNIP3-mediated apoptosis and mitochondrial damage. The polypeptide is 3-ketoacyl-CoA thiolase, mitochondrial (ACAA2) (Pongo abelii (Sumatran orangutan)).